Here is an 879-residue protein sequence, read N- to C-terminus: Leucine--tRNA ligase (879 aa).

The short motif at 45–55 (PYPSGALHMGH) is the 'HIGH' region element. The 'KMSKS' region signature appears at 637–641 (KMSKS). Residue Lys640 participates in ATP binding.

Belongs to the class-I aminoacyl-tRNA synthetase family.

It localises to the cytoplasm. It catalyses the reaction tRNA(Leu) + L-leucine + ATP = L-leucyl-tRNA(Leu) + AMP + diphosphate. The protein is Leucine--tRNA ligase of Xylella fastidiosa (strain 9a5c).